The following is a 685-amino-acid chain: Amino acid transporter heavy chain SLC3A1 (685 aa).

Residues 1 to 11 (MAEDKSKRDSI) are compositionally biased toward basic and acidic residues. The disordered stretch occupies residues 1 to 56 (MAEDKSKRDSIEMSMKGCQTNNGFVHNEDILEQTPDPGSSTDNLKHSTRGILGSQE). The Cytoplasmic segment spans residues 1 to 87 (MAEDKSKRDS…GQARYRIPRE (87 aa)). S10 carries the post-translational modification Phosphoserine. A helical; Signal-anchor for type II membrane protein membrane pass occupies residues 88 to 108 (ILFWLTVASVLVLIAATIAII). At 109–685 (ALSPKCLDWW…SVLNILYTSC (577 aa)) the chain is on the extracellular side. N214 provides a ligand contact to Ca(2+). 2 N-linked (GlcNAc...) asparagine glycosylation sites follow: N214 and N261. A disulfide bond links C242 and C273. Residues D284, F318, L319, and E321 each coordinate Ca(2+). N-linked (GlcNAc...) asparagine glycans are attached at residues N332, N495, N513, and N575. 2 cysteine pairs are disulfide-bonded: C571-C666 and C673-C685.

Disulfide-linked heterodimer composed of the catalytic light subunit SLC7A9 and the heavy subunit SLC3A1. The heterodimer is the minimal functional unit. Assembles in non-covalently linked heterotetramers (dimers of heterodimers) and higher order oligomers; the oligomerization is mediated by SLC3A1 likely to prevent degradation in the endoplasmic reticulum and facilitate heteromer trafficking to the plasma membrane. Disulfide-linked heterodimer composed of the catalytic light subunit SLC7A13 and the heavy subunit SLC3A1. Expressed in the brush border membrane in the kidney (at protein level). Predominantly expressed in the kidney, small intestine and pancreas. Weakly expressed in liver.

It is found in the cell membrane. It localises to the apical cell membrane. Its function is as follows. Acts as a chaperone that facilitates biogenesis and trafficking of functional transporter heteromers to the plasma membrane. Associates with SLC7A9 to form a functional transporter complex that mediates the electrogenic exchange between cationic amino acids and neutral amino acids, with a stoichiometry of 1:1. SLC7A9-SLC3A1 transporter has system b(0,+)-like activity with high affinity for extracellular cationic amino acids and L-cystine and lower affinity for intracellular neutral amino acids. Substrate exchange is driven by high concentration of intracellular neutral amino acids and the intracellular reduction of L-cystine to L-cysteine. SLC7A9-SLC3A1 acts as a major transporter for reabsorption of L-cystine and dibasic amino acids across the brush border membrane in early proximal tubules. Associates with SLC7A13 to form a functional complex that transports anionic and neutral amino acids via exchange or facilitated diffusion. SLC7A13-SLC3A1 may act as a major transporter for L-cystine in late proximal tubules, ensuring its reabsorption from the luminal fluid in exchange for cytosolic L-glutamate or L-aspartate. This is Amino acid transporter heavy chain SLC3A1 from Homo sapiens (Human).